A 128-amino-acid polypeptide reads, in one-letter code: Flagellar hook-basal body complex protein FliE (128 aa).

Residues Met-1–Gly-60 form a disordered region. A compositionally biased stretch (polar residues) spans Arg-33 to Ser-55.

It belongs to the FliE family.

Its subcellular location is the bacterial flagellum basal body. The sequence is that of Flagellar hook-basal body complex protein FliE from Rhodopirellula baltica (strain DSM 10527 / NCIMB 13988 / SH1).